The primary structure comprises 462 residues: MRVSLRSITSLLAAATAAVLAAPATETLDRRAALPNPYDDPFYTTPSNIGTFAKGQVIQSRKVPTDIGNANNAASFQLQYRTTNTQNEAVADVATVWIPAKPASPPKIFSYQVYEDATALDCAPSYSYLTGLDQPNKVTAVLDTPIIIGWALQQGYYVVSSDHEGFKAAFIAGYEEGMAILDGIRALKNYQNLPSDSKVALEGYSGGAHATVWATSLADSYAPELNIVGASHGGTPVSAKDTFTFLNGGPFAGFALAGVSGLSLAHPDMESFIEARLNAKGQQTLKQIRGRGFCLPQVVLTYPFLNVFSLVNDTNLLNEAPIAGILKQETVVQAEASYTVSVPKFPRFIWHAIPDEIVPYQPAATYVKEQCAKGANINFSPYPIAEHLTAEIFGLVPSLWFIKQAFDGTTPKVICGTPIPAIAGITTPSADQVLGSDLANQLRSLNGKQSAFGKPFGPITPP.

Positions 1 to 21 (MRVSLRSITSLLAAATAAVLA) are cleaved as a signal peptide. C122 and C294 are oxidised to a cystine. Catalysis depends on charge relay system residues S205, D355, and H387. C371 and C415 are oxidised to a cystine.

It belongs to the AB hydrolase superfamily. Lipase family. In terms of assembly, monomer.

It is found in the secreted. The catalysed reaction is a triacylglycerol + H2O = a diacylglycerol + a fatty acid + H(+). Hydrolyzes triglycerides, with a preference for substrates with short-chain lengths (C4 to C8). Has the highest activity with tributyrin (C4), followed by tricaproin (C6) and tricaprylin (C8). Can also hydrolyze vinylacetate (C2) and triolein (C18), but with lower efficiency. Has no activity with tripalmitin (C16). The sequence is that of Lipase A from Moesziomyces aphidis (Pseudozyma aphidis).